The sequence spans 621 residues: Glucose 1,6-bisphosphate synthase (621 aa).

Residues arginine 73 and serine 175 each contribute to the alpha-D-glucose 1,6-bisphosphate site. The Phosphoserine intermediate role is filled by serine 175. 4 residues coordinate Mg(2+): serine 175, aspartate 332, aspartate 334, and aspartate 336. Serine 175 carries the phosphoserine modification. 5 residues coordinate alpha-D-glucose 1,6-bisphosphate: aspartate 336, arginine 337, glutamate 433, serine 435, and lysine 447.

This sequence belongs to the phosphohexose mutase family. Expressed at highest levels in the brain and testis, at intermediate levels in thymus, spleen, lung and skeletal muscle, and at lowest levels in kidney, liver and heart.

The protein localises to the cytoplasm. It localises to the cytosol. It catalyses the reaction (2R)-3-phospho-glyceroyl phosphate + alpha-D-glucose 1-phosphate = alpha-D-glucose 1,6-bisphosphate + (2R)-3-phosphoglycerate + H(+). The enzyme catalyses alpha-D-glucose 6-phosphate + (2R)-3-phospho-glyceroyl phosphate = alpha-D-glucose 1,6-bisphosphate + (2R)-3-phosphoglycerate + H(+). It carries out the reaction (2R)-3-phospho-glyceroyl phosphate + alpha-D-ribose 1-phosphate = alpha-D-ribose 1,5-bisphosphate + (2R)-3-phosphoglycerate + H(+). The catalysed reaction is 2-deoxy-alpha-D-ribose 1-phosphate + (2R)-3-phospho-glyceroyl phosphate = 2-deoxy-alpha-D-ribose 1,5-bisphosphate + (2R)-3-phosphoglycerate + H(+). It catalyses the reaction (2R)-3-phospho-glyceroyl phosphate + alpha-D-mannose 1-phosphate = alpha-D-mannose 1,6-bisphosphate + (2R)-3-phosphoglycerate + H(+). In terms of biological role, glucose 1,6-bisphosphate synthase using 1,3-bisphosphoglycerate as a phosphate donor and a series of 1-phosphate sugars, including glucose 1-phosphate, mannose 1-phosphate, ribose 1-phosphate and deoxyribose 1-phosphate, as acceptors. In vitro, also exhibits very low phosphopentomutase and phosphoglucomutase activity which are most probably not physiologically relevant. This Mus musculus (Mouse) protein is Glucose 1,6-bisphosphate synthase.